Here is a 323-residue protein sequence, read N- to C-terminus: 1D-myo-inositol 2-acetamido-2-deoxy-alpha-D-glucopyranoside deacetylase 1 (323 aa).

Zn(2+)-binding residues include histidine 30, aspartate 33, and histidine 165.

Belongs to the MshB deacetylase family. Requires Zn(2+) as cofactor.

The enzyme catalyses 1D-myo-inositol 2-acetamido-2-deoxy-alpha-D-glucopyranoside + H2O = 1D-myo-inositol 2-amino-2-deoxy-alpha-D-glucopyranoside + acetate. Its function is as follows. Catalyzes the deacetylation of 1D-myo-inositol 2-acetamido-2-deoxy-alpha-D-glucopyranoside (GlcNAc-Ins) in the mycothiol biosynthesis pathway. This chain is 1D-myo-inositol 2-acetamido-2-deoxy-alpha-D-glucopyranoside deacetylase 1, found in Catenulispora acidiphila (strain DSM 44928 / JCM 14897 / NBRC 102108 / NRRL B-24433 / ID139908).